A 210-amino-acid chain; its full sequence is Prohead protease (210 aa).

A propeptide spanning residues 1–23 is cleaved from the precursor; that stretch reads MTQAAIDYNKLKSAPVHLDAYIK. Active-site residues include histidine 76, serine 122, and glutamate 148. Positions 167 to 210 are excised as a propeptide; that stretch reads SMNGHDYTEWRKSFTAISSKAVPAQERNLSELEKLAIALGYVKE.

This sequence belongs to the HK97 prohead protease protein family. In terms of processing, cleaves itself autocatalytically to yield the mature form of the protease.

It is found in the virion. Its function is as follows. Serine protease involved in capsid assembly and maturation. Cleaves the major capsid protein, the decoration protein, the portal protein to yield mature procapsids competent for DNA packaging. Acts as a trigger for assembly of the capsid protein. This Escherichia coli (Enterobacteria phage T5) protein is Prohead protease.